The primary structure comprises 665 residues: F-box/LRR-repeat protein 3 (665 aa).

One can recognise an F-box domain in the interval 11 to 60 (KPFDLLSEELVFIILDLISPNPSDLKSFSLTCKSFYQLESKHRGSLKPLR). LRR repeat units lie at residues 61–81 (SDYL…DLTF), 82–108 (CPRV…DLSR), 109–134 (SGSF…DLSN), 135–159 (ATEM…KLGR), 160–185 (CKML…SLKW), 186–211 (CVGV…DLSY), 214–235 (ITGK…LLEG), 236–261 (CFGV…DASS), 262–287 (CQNL…DLSH), 288–312 (CSSV…IRLD), 313–338 (GCSV…SLSK), 339–364 (CVSV…DITC), 365–390 (CRKL…KMES), 391–416 (CSLV…DLTD), 419–440 (IDDE…KLGI), 441–466 (CLNI…DLYR), 467–492 (SVGI…NISY), 493–517 (CQDI…ESRG), 518–543 (CPNI…DLKK), 544–569 (CPSI…NVSD), and 594–619 (SSGL…KLHA).

In Arabidopsis thaliana (Mouse-ear cress), this protein is F-box/LRR-repeat protein 3 (FBL3).